Reading from the N-terminus, the 275-residue chain is MTLQQEIIQALGAKSYINPEEEIRRSVDFLKAYLKTYPFLKSLVLGISGGQDSTLAGKLSQMAISELREETDDDALQFIAVRLPYGVQADEQDCQDAIAFIKPDRVLTVNIKGAVLASEQALREAGIELSDFVRGNEKARERMKAQYSIAGMTHGVVVGTDHAAEAITGFFTKYGDGGTDINPLHRLNKRQGKQLLAALGCPEHLYKKVPTADLEDDRPSLPDEAALGVTYDNIDDYLEGKTLAPAIAKIIEGWYVKTEHKRRLPITVFDDFWKK.

46–53 (GISGGQDS) contacts ATP. D52 contributes to the Mg(2+) binding site. Position 140 (R140) interacts with deamido-NAD(+). T160 contributes to the ATP binding site. E165 lines the Mg(2+) pocket. K173 and D180 together coordinate deamido-NAD(+). The ATP site is built by K189 and T211. 260-261 (HK) is a deamido-NAD(+) binding site.

This sequence belongs to the NAD synthetase family. As to quaternary structure, homodimer.

The enzyme catalyses deamido-NAD(+) + NH4(+) + ATP = AMP + diphosphate + NAD(+) + H(+). It participates in cofactor biosynthesis; NAD(+) biosynthesis; NAD(+) from deamido-NAD(+) (ammonia route): step 1/1. Functionally, catalyzes the ATP-dependent amidation of deamido-NAD to form NAD. Uses ammonia as a nitrogen source. This is NH(3)-dependent NAD(+) synthetase from Salmonella arizonae (strain ATCC BAA-731 / CDC346-86 / RSK2980).